The following is a 303-amino-acid chain: Recombination-associated protein RdgC (303 aa).

It belongs to the RdgC family.

The protein localises to the cytoplasm. The protein resides in the nucleoid. Functionally, may be involved in recombination. This chain is Recombination-associated protein RdgC, found in Edwardsiella ictaluri (strain 93-146).